The chain runs to 484 residues: 60S ribosome subunit biogenesis protein NOP8 (484 aa).

The RRM domain maps to 7–83 (KRIFVGNIFH…NILKVDEAKP (77 aa)). S234, S239, and S268 each carry phosphoserine. The disordered stretch occupies residues 260-330 (DKPMTLNDSD…EGDGQEDNEF (71 aa)). Acidic residues predominate over residues 320–329 (DEGDGQEDNE). A Phosphoserine modification is found at S370.

Interacts with NIP7 and RRP43. Together with DBP6, URB1, URB2 and RSA3, forms an RNA-independent complex, which is required during early maturation of nascent 60S ribosomal subunits.

The protein resides in the nucleus. It localises to the nucleolus. In terms of biological role, required for 60S ribosomal subunit synthesis. May be involved in assembly reactions occurring within late pre-ribosomal particles. The sequence is that of 60S ribosome subunit biogenesis protein NOP8 (NOP8) from Saccharomyces cerevisiae (strain ATCC 204508 / S288c) (Baker's yeast).